Consider the following 354-residue polypeptide: Rhodopsin (354 aa).

Over 1–36 (MNGTEGPNFYVPMSNKTGIVRSPFEYPQYYLAEPWK) the chain is Extracellular. Asn2 and Asn15 each carry an N-linked (GlcNAc...) asparagine glycan. The chain crosses the membrane as a helical span at residues 37–61 (YSVLAAYMFLLILLGLPINFMTLYV). Residues 62–73 (TIQHKKLRTPLN) are Cytoplasmic-facing. A helical transmembrane segment spans residues 74–96 (YILLNLAFANHFMVLCGFTITMY). At 97–110 (TSLHGYFVFGQTGC) the chain is on the extracellular side. Cys110 and Cys187 are oxidised to a cystine. Residues 111–133 (YFEGFFATLGGEIALWSLVVLAI) form a helical membrane-spanning segment. Residues 134-136 (ERY) carry the 'Ionic lock' involved in activated form stabilization motif. Residues 134–152 (ERYIVVCKPMSNFRFGENH) are Cytoplasmic-facing. A helical membrane pass occupies residues 153 to 173 (AMMGVAFTWIMALACAVPPLF). At 174–202 (GWSRYIPEGMQCSCGVDYYTLKPEVNNES) the chain is on the extracellular side. Residues 203–224 (FVIYMFVVHFLIPLIIISFCYG) form a helical membrane-spanning segment. Over 225 to 252 (RLVCTVKEAAAQQQESATTQKAEKEVTR) the chain is Cytoplasmic. The helical transmembrane segment at 253–274 (MVVIMVIFFLICWVPYAYVAFY) threads the bilayer. Residues 275–286 (IFTHQGSEFGPI) lie on the Extracellular side of the membrane. Residues 287 to 308 (FMTVPAFFAKSSAIYNPVIYIM) form a helical membrane-spanning segment. N6-(retinylidene)lysine is present on Lys296. Residues 309–354 (LNKQFRNCMITTLCCGKNPFGDEDASSAATSKTEATSVSTSQVSPA) lie on the Cytoplasmic side of the membrane. Residues Cys322 and Cys323 are each lipidated (S-palmitoyl cysteine). The segment at 331–354 (EDASSAATSKTEATSVSTSQVSPA) is disordered. The span at 334-354 (SSAATSKTEATSVSTSQVSPA) shows a compositional bias: low complexity.

This sequence belongs to the G-protein coupled receptor 1 family. Opsin subfamily. In terms of processing, contains one covalently linked retinal chromophore. Upon light absorption, the covalently bound 11-cis-retinal is converted to all-trans-retinal. After hydrolysis of the Schiff base and release of the covalently bound all-trans-retinal, active rhodopsin is regenerated by binding of a fresh molecule of 11-cis-retinal. Retina. Localized in the ventral part of the retina.

The protein resides in the membrane. Its subcellular location is the cell projection. It is found in the cilium. It localises to the photoreceptor outer segment. Its function is as follows. Photoreceptor required for image-forming vision at low light intensity. Required for photoreceptor cell viability after birth. May use a mixture of retinal and 3-dehydroretinal as visual pigment. Light-induced isomerization of 11-cis to all-trans retinal triggers a conformational change that activates signaling via G-proteins. Subsequent receptor phosphorylation mediates displacement of the bound G-protein alpha subunit by arrestin and terminates signaling. This Aquarana catesbeiana (American bullfrog) protein is Rhodopsin (RHO).